The chain runs to 184 residues: Non-specific lipid transfer protein GPI-anchored 6 (184 aa).

Positions M1–S24 are cleaved as a signal peptide. 4 disulfides stabilise this stretch: C33/C74, C43/C58, C59/C101, and C72/C111. The disordered stretch occupies residues N138–V158. A lipid anchor (GPI-anchor amidated serine) is attached at S160. The propeptide at N161–F184 is removed in mature form.

The protein belongs to the plant LTP family. As to expression, preferentially expressed in the shoot apical meristem and the root meristem. Also present in the ovules and developing embryos. Observed in cotyledons, hypocotyls, flowers, leaves and siliques. Up-regulated in the epidermis of stems.

The protein resides in the cell membrane. Lipid transfer protein involved in seed and ovule maturation and development, probably by regulating the fatty acids homeostasis during suberin and sporopollenin biosynthesis or deposition. Contributes to pre-invasive defense against some non-host powdery mildew pathogens by preventing the penetration of the epidermal cell wall by the fungal agents (e.g. Blumeria graminis f. sp. hordei (Bgh)). This is Non-specific lipid transfer protein GPI-anchored 6 from Arabidopsis thaliana (Mouse-ear cress).